We begin with the raw amino-acid sequence, 127 residues long: Glycine cleavage system H protein (127 aa).

In terms of domain architecture, Lipoyl-binding spans 27–109; the sequence is TVRVGITHIA…YGEGWLYEVK (83 aa). K68 is modified (N6-lipoyllysine).

It belongs to the GcvH family. In terms of assembly, the glycine cleavage system is composed of four proteins: P, T, L and H. Requires (R)-lipoate as cofactor.

Its function is as follows. The glycine cleavage system catalyzes the degradation of glycine. The H protein shuttles the methylamine group of glycine from the P protein to the T protein. This Corynebacterium jeikeium (strain K411) protein is Glycine cleavage system H protein.